A 149-amino-acid polypeptide reads, in one-letter code: UPF0178 protein Psyc_0274 (149 aa).

It belongs to the UPF0178 family.

In Psychrobacter arcticus (strain DSM 17307 / VKM B-2377 / 273-4), this protein is UPF0178 protein Psyc_0274.